Here is a 167-residue protein sequence, read N- to C-terminus: uncharacterized protein (167 aa).

2 DED domains span residues 2–75 (DLKT…NLFQ) and 93–167 (THVL…AKTV).

This is an uncharacterized protein from Saimiriine herpesvirus 2 (strain 11) (SaHV-2).